We begin with the raw amino-acid sequence, 145 residues long: 3-dehydroquinate dehydratase (145 aa).

The active-site Proton acceptor is the Tyr-23. Positions 74, 80, and 87 each coordinate substrate. The Proton donor role is filled by His-100. Residues 101 to 102 and Arg-111 contribute to the substrate site; that span reads IS.

This sequence belongs to the type-II 3-dehydroquinase family. Homododecamer.

It carries out the reaction 3-dehydroquinate = 3-dehydroshikimate + H2O. The protein operates within metabolic intermediate biosynthesis; chorismate biosynthesis; chorismate from D-erythrose 4-phosphate and phosphoenolpyruvate: step 3/7. Functionally, catalyzes a trans-dehydration via an enolate intermediate. This chain is 3-dehydroquinate dehydratase, found in Mycobacterium leprae (strain Br4923).